The following is a 340-amino-acid chain: Holliday junction branch migration complex subunit RuvB (340 aa).

Positions methionine 1–tyrosine 184 are large ATPase domain (RuvB-L). ATP-binding positions include leucine 23, arginine 24, glycine 65, lysine 68, threonine 69, threonine 70, glutamate 131–phenylalanine 133, arginine 174, tyrosine 184, and arginine 221. Position 69 (threonine 69) interacts with Mg(2+). The interval serine 185–asparagine 255 is small ATPAse domain (RuvB-S). Residues alanine 258–phenylalanine 340 form a head domain (RuvB-H) region. Residues arginine 313 and arginine 318 each contribute to the DNA site.

This sequence belongs to the RuvB family. As to quaternary structure, homohexamer. Forms an RuvA(8)-RuvB(12)-Holliday junction (HJ) complex. HJ DNA is sandwiched between 2 RuvA tetramers; dsDNA enters through RuvA and exits via RuvB. An RuvB hexamer assembles on each DNA strand where it exits the tetramer. Each RuvB hexamer is contacted by two RuvA subunits (via domain III) on 2 adjacent RuvB subunits; this complex drives branch migration. In the full resolvosome a probable DNA-RuvA(4)-RuvB(12)-RuvC(2) complex forms which resolves the HJ.

The protein localises to the cytoplasm. It carries out the reaction ATP + H2O = ADP + phosphate + H(+). The RuvA-RuvB-RuvC complex processes Holliday junction (HJ) DNA during genetic recombination and DNA repair, while the RuvA-RuvB complex plays an important role in the rescue of blocked DNA replication forks via replication fork reversal (RFR). RuvA specifically binds to HJ cruciform DNA, conferring on it an open structure. The RuvB hexamer acts as an ATP-dependent pump, pulling dsDNA into and through the RuvAB complex. RuvB forms 2 homohexamers on either side of HJ DNA bound by 1 or 2 RuvA tetramers; 4 subunits per hexamer contact DNA at a time. Coordinated motions by a converter formed by DNA-disengaged RuvB subunits stimulates ATP hydrolysis and nucleotide exchange. Immobilization of the converter enables RuvB to convert the ATP-contained energy into a lever motion, pulling 2 nucleotides of DNA out of the RuvA tetramer per ATP hydrolyzed, thus driving DNA branch migration. The RuvB motors rotate together with the DNA substrate, which together with the progressing nucleotide cycle form the mechanistic basis for DNA recombination by continuous HJ branch migration. Branch migration allows RuvC to scan DNA until it finds its consensus sequence, where it cleaves and resolves cruciform DNA. In Flavobacterium johnsoniae (strain ATCC 17061 / DSM 2064 / JCM 8514 / BCRC 14874 / CCUG 350202 / NBRC 14942 / NCIMB 11054 / UW101) (Cytophaga johnsonae), this protein is Holliday junction branch migration complex subunit RuvB.